The sequence spans 2359 residues: Nonribosomal peptide synthetase anaPS (2359 aa).

An adenylation 1 region spans residues 239-633; that stretch reads RNATVHGDTL…VRRKDNQVKI (395 aa). Residues 770 to 846 form the Carrier 1 domain; the sequence is AAQGKGEEAI…ELASAANLSN (77 aa). Ser807 carries the post-translational modification O-(pantetheine 4'-phosphoryl)serine. Positions 883–1292 are condensation 1; the sequence is EDIYPSTALQ…VGDLPRMSRQ (410 aa). Residues 1321 to 1709 form an adenylation 2 region; that stretch reads LEYPNACAVS…GRKDSQIKIR (389 aa). The Carrier 2 domain maps to 1842–1918; that stretch reads APSNSVEQDL…AIANKIGVVS (77 aa). Ser1879 bears the O-(pantetheine 4'-phosphoryl)serine mark. The segment at 1936–2356 is condensation 2; the sequence is LTPIQEFFFE…LVKCLEDLAS (421 aa).

The protein belongs to the NRP synthetase family.

The enzyme catalyses anthranilate + L-tryptophan + 2 ATP = (R)-benzodiazepinedione + 2 AMP + 2 diphosphate + H(+). It functions in the pathway alkaloid biosynthesis. Nonribosomal peptide synthetase; part of the gene cluster that mediates the biosynthesis of the prenylated pyrroloindoline diketopiperazine acetylaszonalenin. The first step in the pathway is the formation of (R)-benzodiazepinedione by condensation of tryptophan and anthranilic acid catalyzed by the non-ribosomal peptide synthetase anaPS. The prenyltransferase anaPT then converts (R)-benzodiazepinedione to aszonalenin in the presence of dimethylallyl diphosphate (DMAPP) via C3-prenylation. The last step in the biosynthesis of acetylaszonalenin via acetylation of aszonalenin at position N1 catalyzed by anaAT. This chain is Nonribosomal peptide synthetase anaPS, found in Neosartorya fischeri (strain ATCC 1020 / DSM 3700 / CBS 544.65 / FGSC A1164 / JCM 1740 / NRRL 181 / WB 181) (Aspergillus fischerianus).